Here is a 157-residue protein sequence, read N- to C-terminus: Ribosomal RNA large subunit methyltransferase H (157 aa).

Residues leucine 74, glycine 106, and 125–130 (LGNITF) each bind S-adenosyl-L-methionine.

The protein belongs to the RNA methyltransferase RlmH family. In terms of assembly, homodimer.

The protein localises to the cytoplasm. It catalyses the reaction pseudouridine(1915) in 23S rRNA + S-adenosyl-L-methionine = N(3)-methylpseudouridine(1915) in 23S rRNA + S-adenosyl-L-homocysteine + H(+). Its function is as follows. Specifically methylates the pseudouridine at position 1915 (m3Psi1915) in 23S rRNA. The sequence is that of Ribosomal RNA large subunit methyltransferase H from Lawsonia intracellularis (strain PHE/MN1-00).